A 468-amino-acid chain; its full sequence is Beta-amylase (468 aa).

The signal sequence occupies residues 1 to 36 (MTLYRSLWKKGCMLLLSLVLSLTAFIGSPSNTASAA). Asp76 is a substrate binding site. The Ca(2+) site is built by Glu83 and Asp87. Substrate is bound by residues His116 and Asp124. A disulfide bond links Cys118 and Cys126. Glu170 contacts Ca(2+). Residue Glu198 is the Proton donor of the active site. Substrate is bound by residues Lys314, His319, and Thr357. The Proton acceptor role is filled by Glu394. Residues 395 to 396 (NA) and Arg423 each bind substrate.

Belongs to the glycosyl hydrolase 14 family. Requires Ca(2+) as cofactor.

The enzyme catalyses Hydrolysis of (1-&gt;4)-alpha-D-glucosidic linkages in polysaccharides so as to remove successive maltose units from the non-reducing ends of the chains.. The polypeptide is Beta-amylase (Cytobacillus firmus (Bacillus firmus)).